Consider the following 370-residue polypeptide: MKFIDEARIEVIAGDGGDGSASMRREKFVPFGGPDGGDGGRGGNVYAIADRNINTLIDYRYAKKHLARNGENGRGSDCYGKGGDDVTLRMPVGTVVTDMDTGELIADLTEHGQQVMLAQGGAGGLGNLHFKSSTNRAPRQKTDGKPGERRMLRLELKVLADVGLLGMPNAGKSTFISSVSNAKPKIADYPFTTLAPNLGVVRVGPSKSFVIADIPGLIEGAAEGAGLGHQFLRHLQRTGVLLHLVDLAPFDENVDPVAEAKAIVGELRKYDEALYEKPRWLVLNKLDMVPEDEREARVADFLARFEWDGPVFEISALTGQGCEALCYAIYDYLAEHSDAHRAAEEEDLATDVRFRDAPPADGGATPGGDA.

The Obg domain maps to 1-159; that stretch reads MKFIDEARIE…RMLRLELKVL (159 aa). The OBG-type G domain maps to 160-334; it reads ADVGLLGMPN…LCYAIYDYLA (175 aa). GTP is bound by residues 166-173, 191-195, 213-216, 284-287, and 315-317; these read GMPNAGKS, FTTLA, DIPG, NKLD, and SAL. Residues serine 173 and threonine 193 each coordinate Mg(2+). Residues 344 to 370 form a disordered region; it reads EEEDLATDVRFRDAPPADGGATPGGDA.

Belongs to the TRAFAC class OBG-HflX-like GTPase superfamily. OBG GTPase family. As to quaternary structure, monomer. Mg(2+) is required as a cofactor.

The protein resides in the cytoplasm. An essential GTPase which binds GTP, GDP and possibly (p)ppGpp with moderate affinity, with high nucleotide exchange rates and a fairly low GTP hydrolysis rate. Plays a role in control of the cell cycle, stress response, ribosome biogenesis and in those bacteria that undergo differentiation, in morphogenesis control. The sequence is that of GTPase Obg from Burkholderia ambifaria (strain MC40-6).